Reading from the N-terminus, the 154-residue chain is Anaerobic ribonucleoside-triphosphate reductase-activating protein (154 aa).

The [4Fe-4S] cluster site is built by C26, C30, and C33. Residues 32–34 and G74 contribute to the S-adenosyl-L-methionine site; that span reads GCY.

Belongs to the organic radical-activating enzymes family. Forms a tetramer composed of two NrdD and two NrdG subunits. It depends on [4Fe-4S] cluster as a cofactor.

Its subcellular location is the cytoplasm. The enzyme catalyses glycyl-[protein] + reduced [flavodoxin] + S-adenosyl-L-methionine = glycin-2-yl radical-[protein] + semiquinone [flavodoxin] + 5'-deoxyadenosine + L-methionine + H(+). In terms of biological role, activation of anaerobic ribonucleoside-triphosphate reductase under anaerobic conditions by generation of an organic free radical, using S-adenosylmethionine and reduced flavodoxin as cosubstrates to produce 5'-deoxy-adenosine. The chain is Anaerobic ribonucleoside-triphosphate reductase-activating protein (nrdG) from Salmonella typhimurium (strain LT2 / SGSC1412 / ATCC 700720).